The chain runs to 154 residues: MQEKSIRLGIVVAEFNYDITQLMLQKALSHAKFLNAEVKVVIKVPGTFDMPLAIKKLLEKDFIDAVVTLGAVIKGETKHDEIVASQTARKIVDLSTEFNKPVTLGIIGHGATHEQAVERIEEYATRAVEAAIKLVQRTRKIDELKEVKETVIID.

5-amino-6-(D-ribitylamino)uracil is bound by residues Phe15, 47 to 49 (TFD), and 71 to 73 (AVI). 76–77 (ET) contacts (2S)-2-hydroxy-3-oxobutyl phosphate. His79 serves as the catalytic Proton donor. Leu104 provides a ligand contact to 5-amino-6-(D-ribitylamino)uracil. (2S)-2-hydroxy-3-oxobutyl phosphate is bound at residue Arg119.

Belongs to the DMRL synthase family.

It catalyses the reaction (2S)-2-hydroxy-3-oxobutyl phosphate + 5-amino-6-(D-ribitylamino)uracil = 6,7-dimethyl-8-(1-D-ribityl)lumazine + phosphate + 2 H2O + H(+). It participates in cofactor biosynthesis; riboflavin biosynthesis; riboflavin from 2-hydroxy-3-oxobutyl phosphate and 5-amino-6-(D-ribitylamino)uracil: step 1/2. Catalyzes the formation of 6,7-dimethyl-8-ribityllumazine by condensation of 5-amino-6-(D-ribitylamino)uracil with 3,4-dihydroxy-2-butanone 4-phosphate. This is the penultimate step in the biosynthesis of riboflavin. The protein is 6,7-dimethyl-8-ribityllumazine synthase of Saccharolobus islandicus (strain L.S.2.15 / Lassen #1) (Sulfolobus islandicus).